We begin with the raw amino-acid sequence, 63 residues long: Sec-independent protein translocase protein TatA (63 aa).

A helical transmembrane segment spans residues 1 to 21 (MGSFSMWHWLIVLVIVLLLFG). The disordered stretch occupies residues 42–63 (GMTDEDAPDTAKTVDHKADETK). Positions 53–63 (KTVDHKADETK) are enriched in basic and acidic residues.

The protein belongs to the TatA/E family. As to quaternary structure, the Tat system comprises two distinct complexes: a TatABC complex, containing multiple copies of TatA, TatB and TatC subunits, and a separate TatA complex, containing only TatA subunits. Substrates initially bind to the TatABC complex, which probably triggers association of the separate TatA complex to form the active translocon.

Its subcellular location is the cell inner membrane. In terms of biological role, part of the twin-arginine translocation (Tat) system that transports large folded proteins containing a characteristic twin-arginine motif in their signal peptide across membranes. TatA could form the protein-conducting channel of the Tat system. This chain is Sec-independent protein translocase protein TatA, found in Rhizobium leguminosarum bv. trifolii (strain WSM2304).